Reading from the N-terminus, the 337-residue chain is Glyceraldehyde-3-phosphate dehydrogenase 1 (337 aa).

Residues 12-13, Asp-34, and Met-79 each bind NAD(+); that span reads RI. Residues 151 to 153, Thr-182, 211 to 212, and Arg-234 each bind D-glyceraldehyde 3-phosphate; these read SCT and TG. Cys-152 (nucleophile) is an active-site residue. Asn-316 serves as a coordination point for NAD(+).

Belongs to the glyceraldehyde-3-phosphate dehydrogenase family. In terms of assembly, homotetramer.

The protein localises to the cytoplasm. The enzyme catalyses D-glyceraldehyde 3-phosphate + phosphate + NAD(+) = (2R)-3-phospho-glyceroyl phosphate + NADH + H(+). It participates in carbohydrate degradation; glycolysis; pyruvate from D-glyceraldehyde 3-phosphate: step 1/5. This is Glyceraldehyde-3-phosphate dehydrogenase 1 (GAP1) from Giardia intestinalis (Giardia lamblia).